The primary structure comprises 594 residues: Glomulin (594 aa).

Residue Ala2 is modified to N-acetylalanine. Positions 2-553 are alpha-helical region with structural similarity to HEAT repeats; that stretch reads AVEELQSIIK…EEIPNMPPEM (552 aa). The tract at residues 300 to 594 is important for interaction with RBX1; the sequence is IDQLPMVLSP…STSEENIGIK (295 aa).

As to quaternary structure, interacts with FKBP4 and FKBP1A. Isoform 1: Interacts with RBX1 (via RING domain). Identified in complexes that contain RBX1 plus one of the cullins CUL1, CUL2, CUL3, and CUL4A. Identified in a SCF complex composed of CUL1, RBX1, SKP1, FBXW7 and GLMN. Component of a SCF-like complex consisting of CUL7, RBX1, SKP1, FBXW8 and GLMN. Interacts with unphosphorylated MET and is released upon MET phosphorylation. In terms of processing, phosphorylated on tyrosine residues. As to expression, ubiquitous.

Its function is as follows. Regulatory component of cullin-RING-based SCF (SKP1-Cullin-F-box protein) E3 ubiquitin-protein ligase complexes. Inhibits E3 ubiquitin ligase activity by binding to RBX1 (via RING domain) and inhibiting its interaction with the E2 ubiquitin-conjugating enzyme CDC34. Inhibits RBX1-mediated neddylation of CUL1. Required for normal stability and normal cellular levels of key components of SCF ubiquitin ligase complexes, including FBXW7, RBX1, CUL1, CUL2, CUL3, CUL4A, and thereby contributes to the regulation of CCNE1 and MYC levels. Essential for normal development of the vasculature. Contributes to the regulation of RPS6KB1 phosphorylation. This Homo sapiens (Human) protein is Glomulin (GLMN).